The following is a 638-amino-acid chain: uncharacterized protein (638 aa).

This is an uncharacterized protein from Homo sapiens (Human).